We begin with the raw amino-acid sequence, 529 residues long: Phosphoenolpyruvate carboxykinase (ATP) (529 aa).

Positions 55, 190, and 196 each coordinate substrate. ATP is bound by residues lysine 196, histidine 215, and 231–239; that span reads GLSGTGKTT. 2 residues coordinate Mn(2+): lysine 196 and histidine 215. Aspartate 252 provides a ligand contact to Mn(2+). Positions 280, 317, and 442 each coordinate ATP. Arginine 317 contacts substrate.

It belongs to the phosphoenolpyruvate carboxykinase (ATP) family. The cofactor is Mn(2+).

The protein localises to the cytoplasm. The catalysed reaction is oxaloacetate + ATP = phosphoenolpyruvate + ADP + CO2. Its pathway is carbohydrate biosynthesis; gluconeogenesis. Its function is as follows. Involved in the gluconeogenesis. Catalyzes the conversion of oxaloacetate (OAA) to phosphoenolpyruvate (PEP) through direct phosphoryl transfer between the nucleoside triphosphate and OAA. The chain is Phosphoenolpyruvate carboxykinase (ATP) from Deinococcus geothermalis (strain DSM 11300 / CIP 105573 / AG-3a).